A 383-amino-acid polypeptide reads, in one-letter code: ATP phosphoribosyltransferase regulatory subunit (383 aa).

This sequence belongs to the class-II aminoacyl-tRNA synthetase family. HisZ subfamily. Heteromultimer composed of HisG and HisZ subunits.

It localises to the cytoplasm. Its pathway is amino-acid biosynthesis; L-histidine biosynthesis; L-histidine from 5-phospho-alpha-D-ribose 1-diphosphate: step 1/9. Functionally, required for the first step of histidine biosynthesis. May allow the feedback regulation of ATP phosphoribosyltransferase activity by histidine. The chain is ATP phosphoribosyltransferase regulatory subunit from Cupriavidus necator (strain ATCC 17699 / DSM 428 / KCTC 22496 / NCIMB 10442 / H16 / Stanier 337) (Ralstonia eutropha).